Reading from the N-terminus, the 125-residue chain is Protein ApaG (125 aa).

Residues 1-125 (MADSPRVCVQ…FRLAVPTLIH (125 aa)) form the ApaG domain.

This chain is Protein ApaG, found in Cronobacter sakazakii (strain ATCC BAA-894) (Enterobacter sakazakii).